A 131-amino-acid chain; its full sequence is Small ribosomal subunit protein uS8 (131 aa).

It belongs to the universal ribosomal protein uS8 family. As to quaternary structure, part of the 30S ribosomal subunit. Contacts proteins S5 and S12.

One of the primary rRNA binding proteins, it binds directly to 16S rRNA central domain where it helps coordinate assembly of the platform of the 30S subunit. In Polaromonas naphthalenivorans (strain CJ2), this protein is Small ribosomal subunit protein uS8.